Here is a 1582-residue protein sequence, read N- to C-terminus: Mediator of RNA polymerase II transcription subunit 12 (1582 aa).

Disordered regions lie at residues 1 to 114 (MIPN…PSAL), 146 to 189 (PQGK…VQTT), and 1479 to 1512 (SQLSASISSPAAGGSTPTPIPSGTLSGGHSSQAT). A compositionally biased stretch (polar residues) spans 83 to 100 (AESSANPASPTPATTGDS). A compositionally biased stretch (low complexity) spans 1479 to 1493 (SQLSASISSPAAGGS). The span at 1499 to 1512 (PSGTLSGGHSSQAT) shows a compositional bias: polar residues.

This sequence belongs to the Mediator complex subunit 12 family. As to quaternary structure, component of the srb8-11 complex, which itself associates with the Mediator complex.

The protein resides in the nucleus. Its function is as follows. Component of the srb8-11 complex. The srb8-11 complex is a regulatory module of the Mediator complex which is itself involved in regulation of basal and activated RNA polymerase II-dependent transcription. The srb8-11 complex may be involved in the transcriptional repression of a subset of genes regulated by Mediator. It may inhibit the association of the Mediator complex with RNA polymerase II to form the holoenzyme complex. In Emericella nidulans (strain FGSC A4 / ATCC 38163 / CBS 112.46 / NRRL 194 / M139) (Aspergillus nidulans), this protein is Mediator of RNA polymerase II transcription subunit 12 (srb8).